A 519-amino-acid polypeptide reads, in one-letter code: Spermatocyte protein spe-8 (519 aa).

Disordered stretches follow at residues 1–39 (MSGV…NPNV) and 73–97 (NNLK…KQRD). Over residues 73–84 (NNLKKSASFDSK) the composition is skewed to polar residues. A compositionally biased stretch (basic and acidic residues) spans 85–97 (NQPEDSKTPKQRD). Residues 119 to 208 (FYHGFMGRTE…PFYDNMTLIC (90 aa)) form the SH2 domain. ATP-binding positions include 146 to 154 (VGRRVAYVI) and lysine 184. The Protein kinase domain maps to 209-490 (GLARHEWQLN…KEEAGMHELD (282 aa)). The active-site Proton acceptor is the aspartate 349.

Belongs to the protein kinase superfamily. Tyr protein kinase family. Fes/fps subfamily. Expressed in hermaphrodite larvae but not in adult. Expressed in both male larvae and adult.

The protein localises to the cell membrane. It is found in the cytoplasm. The catalysed reaction is L-tyrosyl-[protein] + ATP = O-phospho-L-tyrosyl-[protein] + ADP + H(+). Probable non-receptor tyrosine-protein kinase which plays a role in spermatid activation (spermiogenesis) in hermaphrodites. This is Spermatocyte protein spe-8 from Caenorhabditis briggsae.